A 101-amino-acid chain; its full sequence is NAD(P)H-quinone oxidoreductase subunit 4L, chloroplastic (101 aa).

The next 3 helical transmembrane spans lie at 2-22 (MFER…YGLI), 32-52 (ICLE…SDLF), and 61-81 (IFAI…LSIL).

The protein belongs to the complex I subunit 4L family. NDH is composed of at least 16 different subunits, 5 of which are encoded in the nucleus.

It is found in the plastid. It localises to the chloroplast thylakoid membrane. It carries out the reaction a plastoquinone + NADH + (n+1) H(+)(in) = a plastoquinol + NAD(+) + n H(+)(out). The enzyme catalyses a plastoquinone + NADPH + (n+1) H(+)(in) = a plastoquinol + NADP(+) + n H(+)(out). NDH shuttles electrons from NAD(P)H:plastoquinone, via FMN and iron-sulfur (Fe-S) centers, to quinones in the photosynthetic chain and possibly in a chloroplast respiratory chain. The immediate electron acceptor for the enzyme in this species is believed to be plastoquinone. Couples the redox reaction to proton translocation, and thus conserves the redox energy in a proton gradient. The sequence is that of NAD(P)H-quinone oxidoreductase subunit 4L, chloroplastic from Zea mays (Maize).